We begin with the raw amino-acid sequence, 624 residues long: DNA mismatch repair protein MutL (624 aa).

The interval 336–357 is disordered; the sequence is GEGFHETSDSFSSRSSQHSDAR. The span at 344–353 shows a compositional bias: low complexity; sequence DSFSSRSSQH.

The protein belongs to the DNA mismatch repair MutL/HexB family.

Its function is as follows. This protein is involved in the repair of mismatches in DNA. It is required for dam-dependent methyl-directed DNA mismatch repair. May act as a 'molecular matchmaker', a protein that promotes the formation of a stable complex between two or more DNA-binding proteins in an ATP-dependent manner without itself being part of a final effector complex. This is DNA mismatch repair protein MutL from Chlorobium phaeobacteroides (strain BS1).